The sequence spans 347 residues: Bifunctional methylenetetrahydrofolate dehydrogenase/cyclohydrolase 2, mitochondrial (347 aa).

Substrate contacts are provided by residues 98–102 (YVRNK) and 145–147 (VQL). NAD(+) contacts are provided by residues 214 to 216 (GRS) and Arg247. Substrate is bound at residue 323–327 (PGGVG).

The protein belongs to the tetrahydrofolate dehydrogenase/cyclohydrolase family. The cofactor is Mg(2+).

Its subcellular location is the mitochondrion inner membrane. The catalysed reaction is (6R)-5,10-methylene-5,6,7,8-tetrahydrofolate + NAD(+) = (6R)-5,10-methenyltetrahydrofolate + NADH. The enzyme catalyses (6R)-5,10-methenyltetrahydrofolate + H2O = (6R)-10-formyltetrahydrofolate + H(+). It carries out the reaction (6R)-5,10-methylene-5,6,7,8-tetrahydrofolate + NADP(+) = (6R)-5,10-methenyltetrahydrofolate + NADPH. Its pathway is one-carbon metabolism; tetrahydrofolate interconversion. Its function is as follows. Bifunctional mitochondrial folate-interconverting enzyme that has both NAD/NADP-dependent methylenetetrahydrofolate dehydrogenase and methenyltetrahydrofolate cyclohydrolase activities. In Callithrix jacchus (White-tufted-ear marmoset), this protein is Bifunctional methylenetetrahydrofolate dehydrogenase/cyclohydrolase 2, mitochondrial.